Here is a 338-residue protein sequence, read N- to C-terminus: Sporulation-specific protein 4 (338 aa).

Residues 14 to 37 (QEENKNFLHKNTNEPNEMEQSQTQ) form a disordered region. Polar residues predominate over residues 22-37 (HKNTNEPNEMEQSQTQ).

Its function is as follows. Not essential for sporulation. Might be a component of the cell wall. The chain is Sporulation-specific protein 4 (SPS4) from Saccharomyces cerevisiae (strain ATCC 204508 / S288c) (Baker's yeast).